Consider the following 492-residue polypeptide: Glutamate--tRNA ligase (492 aa).

Residues 13–23 (PSPTGTPHVGM) carry the 'HIGH' region motif. A 'KMSKS' region motif is present at residues 257 to 261 (KLSKR). Lysine 260 contacts ATP.

Belongs to the class-I aminoacyl-tRNA synthetase family. Glutamate--tRNA ligase type 1 subfamily. As to quaternary structure, monomer.

It is found in the cytoplasm. The enzyme catalyses tRNA(Glu) + L-glutamate + ATP = L-glutamyl-tRNA(Glu) + AMP + diphosphate. Functionally, catalyzes the attachment of glutamate to tRNA(Glu) in a two-step reaction: glutamate is first activated by ATP to form Glu-AMP and then transferred to the acceptor end of tRNA(Glu). The chain is Glutamate--tRNA ligase from Mycolicibacterium paratuberculosis (strain ATCC BAA-968 / K-10) (Mycobacterium paratuberculosis).